Consider the following 267-residue polypeptide: 2-keto-3-deoxy-L-rhamnonate aldolase (267 aa).

His49 (proton acceptor) is an active-site residue. Gln151 contributes to the substrate binding site. Position 153 (Glu153) interacts with Mg(2+). Residues Ala178 and Asp179 each coordinate substrate. Asp179 is a binding site for Mg(2+).

Belongs to the HpcH/HpaI aldolase family. KDR aldolase subfamily. Homohexamer. Mg(2+) is required as a cofactor.

The catalysed reaction is 2-dehydro-3-deoxy-L-rhamnonate = (S)-lactaldehyde + pyruvate. Its function is as follows. Catalyzes the reversible retro-aldol cleavage of 2-keto-3-deoxy-L-rhamnonate (KDR) to pyruvate and lactaldehyde. This chain is 2-keto-3-deoxy-L-rhamnonate aldolase, found in Shigella dysenteriae serotype 1 (strain Sd197).